The sequence spans 95 residues: F(1)-ATPase inhibitor IF(1), mitochondrial (95 aa).

The N-terminal 25 residues, 1-25 (MLRTTVSKLARPTVSRAFATTSRAL), are a transit peptide targeting the mitochondrion. 2 disordered regions span residues 20–48 (TTSR…REKA) and 76–95 (LKTL…GERN).

The protein belongs to the ATPase inhibitor family. In terms of assembly, associates with the mitochondrial small ribosomal subunit (mt-SSU). IF(1) coiled-coil forms a helical bundle with the C-terminal extension of uS17m and also binds to mS27 in the mtSSU tail. Since the C-terminal extension of uS17m stabilizing the IF(1) on the mt-SSU is specific to N.crassa, IF(1) binding might also be specific.

The protein resides in the mitochondrion. In terms of biological role, endogenous F(1)F(0)-ATPase inhibitor limiting ATP depletion when the mitochondrial membrane potential falls below a threshold and the F(1)F(0)-ATP synthase starts hydrolyzing ATP to pump protons out of the mitochondrial matrix. Required to avoid the consumption of cellular ATP when the F(1)F(0)-ATP synthase enzyme acts as an ATP hydrolase. Functions through inserting its N-terminal part into the catalytically active F1-ATPase, thereby blocking its rotational movement and subsequently the ATP hydrolase activity. This chain is F(1)-ATPase inhibitor IF(1), mitochondrial (inh1), found in Neurospora crassa (strain ATCC 24698 / 74-OR23-1A / CBS 708.71 / DSM 1257 / FGSC 987).